A 246-amino-acid polypeptide reads, in one-letter code: Transcriptional regulatory protein LytR (246 aa).

Residues 2 to 116 enclose the Response regulatory domain; it reads KALIIDDEPL…RIEQAVNKVR (115 aa). A 4-aspartylphosphate modification is found at Asp53. The region spanning 141–245 is the HTH LytTR-type domain; the sequence is LPVEIDDKIH…MKDFKASIGL (105 aa).

As to quaternary structure, homodimer; when phosphorylated. Post-translationally, phosphorylated and dephosphorylated by LytS.

The protein localises to the cytoplasm. Member of the two-component regulatory system LytR/LytS that regulates genes involved in autolysis, programmed cell death, biofilm formation and cell wall metabolism. Also participates in sensing and responding to host defense cationic antimicrobial peptides (HDPs). Upon phosphorylation by LytS, functions as a transcription regulator by direct binding to promoter regions of target genes including lrgA and lrgB, to positively regulate their expression. This chain is Transcriptional regulatory protein LytR (lytR), found in Staphylococcus aureus (strain MW2).